The primary structure comprises 99 residues: A-type ATP synthase subunit F (99 aa).

This sequence belongs to the V-ATPase F subunit family. Has multiple subunits with at least A(3), B(3), C, D, E, F, H, I and proteolipid K(x).

It localises to the cell membrane. Functionally, component of the A-type ATP synthase that produces ATP from ADP in the presence of a proton gradient across the membrane. The protein is A-type ATP synthase subunit F of Methanocella arvoryzae (strain DSM 22066 / NBRC 105507 / MRE50).